The sequence spans 269 residues: Chymotrypsin-like elastase family member 2A (269 aa).

The N-terminal stretch at Met1–Ser16 is a signal peptide. Positions Cys17–Arg28 are cleaved as a propeptide — activation peptide. Residues Val29 to Glu267 enclose the Peptidase S1 domain. A disulfide bridge connects residues Cys58 and Cys74. Active-site charge relay system residues include His73 and Asp121. 3 disulfide bridges follow: Cys155–Cys222, Cys186–Cys202, and Cys212–Cys243. Ser216 serves as the catalytic Charge relay system.

This sequence belongs to the peptidase S1 family. Elastase subfamily. Interacts with CPA1. Interacts with SERPINA1. As to expression, pancreas.

It localises to the secreted. It catalyses the reaction Preferential cleavage: Leu-|-Xaa, Met-|-Xaa and Phe-|-Xaa. Hydrolyzes elastin.. In terms of biological role, elastase that enhances insulin signaling and might have a physiologic role in cellular glucose metabolism. Circulates in plasma and reduces platelet hyperactivation, triggers both insulin secretion and degradation, and increases insulin sensitivity. This chain is Chymotrypsin-like elastase family member 2A (CELA2A), found in Bos taurus (Bovine).